A 459-amino-acid polypeptide reads, in one-letter code: WD repeat-containing protein 41 (459 aa).

WD repeat units follow at residues 40–79 (KAHHDIVRFLVQLDDYRFASAGDDGIVVVWNAQTGEKLLE), 82–128 (GHTQ…QVQR), 131–168 (CFQSTVKCLTVLQRLDVWLSGGNDLCVWNRKLDLLCKT), 220–258 (DHQDNILSLINVNDLSFVTGSHVGELIIWDALDWTMQAY), 321–359 (AHDSNVLHVARLPNRQLISCSEDGSVRIWELREKQQLAA), and 403–441 (GHSSSVEMFLYFEDHGLVTCSADHLIILWKNGERESGLR).

Component of the C9orf72-SMCR8 complex, at least composed of C9orf72, SMCR8 and WDR41. The complex is formed of two protomers, each individually consisting of one molecule each of C9orf72, SMCR8 and WDR41. The protomers homodimerize via an interaction between C9orf72 (via C-terminus) and SMCR8 (via N-terminus). Within each protomer SMCR8 (via DENN domain) acts as a bridging protein between WDR41 (via C-terminus and N-terminus) and C9orf72 (via C-terminus). The C9orf72-SMCR8 complex associates with the ULK1/ATG1 kinase complex.

The protein resides in the cytoplasm. In terms of biological role, non-catalytic component of the C9orf72-SMCR8 complex, a complex that has guanine nucleotide exchange factor (GEF) activity and regulates autophagy. The C9orf72-SMCR8 complex promotes the exchange of GDP to GTP, converting inactive GDP-bound RAB8A and RAB39B into their active GTP-bound form, thereby promoting autophagosome maturation. As part of the C9orf72-SMCR8 complex, stimulates RAB8A and RAB11A GTPase activity in vitro, however WDR42 is shown not be an essential complex component for this function. The C9orf72-SMCR8 complex also acts as a negative regulator of autophagy initiation by interacting with the ULK1/ATG1 kinase complex and inhibiting its protein kinase activity. This is WD repeat-containing protein 41 from Homo sapiens (Human).